We begin with the raw amino-acid sequence, 254 residues long: Alcohol dehydrogenase (254 aa).

10-33 (FVAGLGGIGLDTSRELVKRDLKNL) is an NAD(+) binding site. Residue Ser138 participates in substrate binding. Tyr151 acts as the Proton acceptor in catalysis.

It belongs to the short-chain dehydrogenases/reductases (SDR) family. As to quaternary structure, homodimer.

It carries out the reaction a primary alcohol + NAD(+) = an aldehyde + NADH + H(+). The catalysed reaction is a secondary alcohol + NAD(+) = a ketone + NADH + H(+). The polypeptide is Alcohol dehydrogenase (Adh) (Drosophila subobscura (Fruit fly)).